A 147-amino-acid polypeptide reads, in one-letter code: Large ribosomal subunit protein uL13 (147 aa).

It belongs to the universal ribosomal protein uL13 family. Part of the 50S ribosomal subunit.

This protein is one of the early assembly proteins of the 50S ribosomal subunit, although it is not seen to bind rRNA by itself. It is important during the early stages of 50S assembly. The polypeptide is Large ribosomal subunit protein uL13 (Pseudothermotoga lettingae (strain ATCC BAA-301 / DSM 14385 / NBRC 107922 / TMO) (Thermotoga lettingae)).